The following is a 339-amino-acid chain: MKPYPIDLVSVVIPVYNEEASLPELLRRTEAACLELGRAFEIVLVDDGSRDRSAELLQAAAERDGSAVVAVILNRNYGQHAAILAGFEQSRGDLVITLDADLQNPPEEIPRLVERAAQGYDVVGSIRAERQDSAWRRWPSRLVNLAVQRSTGVAMHDYGCMLRAYRRSIVEAMLACRERSTFIPILANGFARHTCEIRVAHAERAHGESKYSAMRLLNLMFDLVTCMTTTPLRLLSLVGGGMALAGFLFALFLLVLRLAFGAAWAGNGLFVLFAVLFMFSGVQLLGMGLLGEYLGRMYSDVRARPRFFIERVVRATPSALPSALQRAGFTSSSSEPSTP.

The next 2 helical transmembrane spans lie at 235–255 (LSLV…FLLV) and 269–289 (LFVL…GMGL).

It belongs to the glycosyltransferase 2 family.

Its subcellular location is the cell inner membrane. It carries out the reaction UDP-4-deoxy-4-formamido-beta-L-arabinose + di-trans,octa-cis-undecaprenyl phosphate = 4-deoxy-4-formamido-alpha-L-arabinopyranosyl di-trans,octa-cis-undecaprenyl phosphate + UDP. It participates in glycolipid biosynthesis; 4-amino-4-deoxy-alpha-L-arabinose undecaprenyl phosphate biosynthesis; 4-amino-4-deoxy-alpha-L-arabinose undecaprenyl phosphate from UDP-4-deoxy-4-formamido-beta-L-arabinose and undecaprenyl phosphate: step 1/2. It functions in the pathway bacterial outer membrane biogenesis; lipopolysaccharide biosynthesis. Functionally, catalyzes the transfer of 4-deoxy-4-formamido-L-arabinose from UDP to undecaprenyl phosphate. The modified arabinose is attached to lipid A and is required for resistance to polymyxin and cationic antimicrobial peptides. The polypeptide is Undecaprenyl-phosphate 4-deoxy-4-formamido-L-arabinose transferase (Pseudomonas aeruginosa (strain LESB58)).